Consider the following 232-residue polypeptide: Flavin-dependent thymidylate synthase (232 aa).

The region spanning 1 to 204 (MKIALLQHTP…PTIFRDAGPG (204 aa)) is the ThyX domain. Residues serine 55, 79-81 (RHR), and glutamine 87 each bind FAD. Residues 76–79 (QLVR), 87–91 (QQSQR), and arginine 143 contribute to the dUMP site. Positions 79–89 (RHRIASYSQQS) match the ThyX motif motif. Residues 159–161 (NAR) and histidine 165 contribute to the FAD site. Arginine 170 contributes to the dUMP binding site. The active-site Involved in ionization of N3 of dUMP, leading to its activation is arginine 170.

Belongs to the thymidylate synthase ThyX family. Homotetramer. It depends on FAD as a cofactor.

It carries out the reaction dUMP + (6R)-5,10-methylene-5,6,7,8-tetrahydrofolate + NADPH + H(+) = dTMP + (6S)-5,6,7,8-tetrahydrofolate + NADP(+). It functions in the pathway pyrimidine metabolism; dTTP biosynthesis. Functionally, catalyzes the reductive methylation of 2'-deoxyuridine-5'-monophosphate (dUMP) to 2'-deoxythymidine-5'-monophosphate (dTMP) while utilizing 5,10-methylenetetrahydrofolate (mTHF) as the methyl donor, and NADPH and FADH(2) as the reductant. This chain is Flavin-dependent thymidylate synthase, found in Geobacter sulfurreducens (strain ATCC 51573 / DSM 12127 / PCA).